Here is an 88-residue protein sequence, read N- to C-terminus: Putative membrane protein insertion efficiency factor (88 aa).

The protein belongs to the UPF0161 family.

It localises to the cell inner membrane. Its function is as follows. Could be involved in insertion of integral membrane proteins into the membrane. The sequence is that of Putative membrane protein insertion efficiency factor from Burkholderia vietnamiensis (strain G4 / LMG 22486) (Burkholderia cepacia (strain R1808)).